Reading from the N-terminus, the 151-residue chain is UPF0178 protein YaiI (151 aa).

It belongs to the UPF0178 family.

The sequence is that of UPF0178 protein YaiI from Salmonella arizonae (strain ATCC BAA-731 / CDC346-86 / RSK2980).